The sequence spans 639 residues: 1-deoxy-D-xylulose-5-phosphate synthase (639 aa).

Thiamine diphosphate is bound by residues histidine 79 and 120-122; that span reads GHS. Residue aspartate 151 participates in Mg(2+) binding. Residues 152–153, asparagine 180, tyrosine 288, and glutamate 370 contribute to the thiamine diphosphate site; that span reads GG. Position 180 (asparagine 180) interacts with Mg(2+).

It belongs to the transketolase family. DXPS subfamily. In terms of assembly, homodimer. The cofactor is Mg(2+). Requires thiamine diphosphate as cofactor.

The enzyme catalyses D-glyceraldehyde 3-phosphate + pyruvate + H(+) = 1-deoxy-D-xylulose 5-phosphate + CO2. It participates in metabolic intermediate biosynthesis; 1-deoxy-D-xylulose 5-phosphate biosynthesis; 1-deoxy-D-xylulose 5-phosphate from D-glyceraldehyde 3-phosphate and pyruvate: step 1/1. Catalyzes the acyloin condensation reaction between C atoms 2 and 3 of pyruvate and glyceraldehyde 3-phosphate to yield 1-deoxy-D-xylulose-5-phosphate (DXP). The protein is 1-deoxy-D-xylulose-5-phosphate synthase of Methylococcus capsulatus (strain ATCC 33009 / NCIMB 11132 / Bath).